Reading from the N-terminus, the 407-residue chain is Large ribosomal subunit protein uL3-like (407 aa).

Residues 1-31 (MSHRKFSAPRHGHLGFLPHKRSHRHRGKVKT) show a composition bias toward basic residues. Disordered stretches follow at residues 1-35 (MSHR…WPRD) and 383-407 (QEKR…SGDL). Positions 394–407 (KHLEKEKPETSGDL) are enriched in basic and acidic residues.

The protein belongs to the universal ribosomal protein uL3 family. In terms of assembly, component of the large ribosomal subunit in striated muscle cells.

Heart- and skeletal muscle-specific component of the ribosome, which regulates muscle function. Component of the large ribosomal subunit in striated muscle cells: replaces the RPL3 paralog in the ribosome in these cells. The ribosome is a large ribonucleoprotein complex responsible for the synthesis of proteins in the cell. Inhibits myotube growth and muscle function. The protein is Large ribosomal subunit protein uL3-like (RPL3L) of Bos taurus (Bovine).